Reading from the N-terminus, the 168-residue chain is NADH-quinone oxidoreductase subunit B (168 aa).

[4Fe-4S] cluster-binding residues include cysteine 37, cysteine 38, cysteine 103, and cysteine 132.

This sequence belongs to the complex I 20 kDa subunit family. NDH-1 is composed of 14 different subunits. Subunits NuoB, C, D, E, F, and G constitute the peripheral sector of the complex. It depends on [4Fe-4S] cluster as a cofactor.

The protein localises to the cell inner membrane. The enzyme catalyses a quinone + NADH + 5 H(+)(in) = a quinol + NAD(+) + 4 H(+)(out). NDH-1 shuttles electrons from NADH, via FMN and iron-sulfur (Fe-S) centers, to quinones in the respiratory chain. The immediate electron acceptor for the enzyme in this species is believed to be ubiquinone. Couples the redox reaction to proton translocation (for every two electrons transferred, four hydrogen ions are translocated across the cytoplasmic membrane), and thus conserves the redox energy in a proton gradient. In Campylobacter fetus subsp. fetus (strain 82-40), this protein is NADH-quinone oxidoreductase subunit B.